A 371-amino-acid chain; its full sequence is Isopentenyl-diphosphate delta-isomerase (371 aa).

9–10 (RK) lines the substrate pocket. Residues T66, 67–69 (GMT), S100, and N128 contribute to the FMN site. Residue 100–102 (SQR) participates in substrate binding. Residue Q167 participates in substrate binding. E168 serves as a coordination point for Mg(2+). FMN contacts are provided by residues K199, S224, T229, 278–280 (GMR), and 299–300 (AL).

Belongs to the IPP isomerase type 2 family. Homooctamer. Dimer of tetramers. FMN serves as cofactor. The cofactor is NADPH. It depends on Mg(2+) as a cofactor.

The protein resides in the cytoplasm. It carries out the reaction isopentenyl diphosphate = dimethylallyl diphosphate. Involved in the biosynthesis of isoprenoids. Catalyzes the 1,3-allylic rearrangement of the homoallylic substrate isopentenyl (IPP) to its allylic isomer, dimethylallyl diphosphate (DMAPP). This chain is Isopentenyl-diphosphate delta-isomerase, found in Pyrococcus horikoshii (strain ATCC 700860 / DSM 12428 / JCM 9974 / NBRC 100139 / OT-3).